The primary structure comprises 199 residues: Patulin biosynthesis cluster protein F (199 aa).

Residues Met-1–Ala-21 form the signal peptide. N-linked (GlcNAc...) asparagine glycans are attached at residues Asn-129 and Asn-183.

This sequence belongs to the patF family.

The protein resides in the cytoplasm. Its subcellular location is the cytosol. It catalyses the reaction phyllostine = neopatulin. It functions in the pathway mycotoxin biosynthesis; patulin biosynthesis. In terms of biological role, part of the gene cluster that mediates the biosynthesis of patulin, an acetate-derived tetraketide mycotoxin produced by several fungal species that shows antimicrobial properties against several bacteria. PatF catalyzes the conversion of phyllostine into neopatulin. The pathway begins with the synthesis of 6-methylsalicylic acid by the polyketide synthase (PKS) patK via condensation of acetate and malonate units. The 6-methylsalicylic acid decarboxylase patG then catalyzes the decarboxylation of 6-methylsalicylic acid to yield m-cresol (also known as 3-methylphenol). These first reactions occur in the cytosol. The intermediate m-cresol is then transported into the endoplasmic reticulum where the cytochrome P450 monooxygenase patH converts it to m-hydroxybenzyl alcohol, which is further converted to gentisyl alcohol by the cytochrome P450 monooxygenase patI. The oxidoreductases patJ and patO further convert gentisyl alcohol to isoepoxydon in the vacuole. PatN catalyzes then the transformation of isoepoxydon into phyllostine. The cluster protein patF is responsible for the conversion from phyllostine to neopatulin whereas the alcohol dehydrogenase patD converts neopatulin to E-ascladiol. The steps between isoepoxydon and E-ascladiol occur in the cytosol, and E-ascladiol is probably secreted to the extracellular space by one of the cluster-specific transporters patC or patM. Finally, the secreted patulin synthase patE catalyzes the conversion of E-ascladiol to patulin. In Penicillium expansum (Blue mold rot fungus), this protein is Patulin biosynthesis cluster protein F.